The sequence spans 267 residues: 4-hydroxy-tetrahydrodipicolinate reductase (267 aa).

NAD(+) contacts are provided by residues 10 to 15 and Glu36; that span reads GCGGRM. NADP(+) is bound at residue Arg37. NAD(+) contacts are provided by residues 99–101 and 123–126; these read GTT and APNF. His156 (proton donor/acceptor) is an active-site residue. (S)-2,3,4,5-tetrahydrodipicolinate is bound at residue His157. Lys160 acts as the Proton donor in catalysis. Residue 166-167 participates in (S)-2,3,4,5-tetrahydrodipicolinate binding; that stretch reads GT.

This sequence belongs to the DapB family.

Its subcellular location is the cytoplasm. It carries out the reaction (S)-2,3,4,5-tetrahydrodipicolinate + NAD(+) + H2O = (2S,4S)-4-hydroxy-2,3,4,5-tetrahydrodipicolinate + NADH + H(+). It catalyses the reaction (S)-2,3,4,5-tetrahydrodipicolinate + NADP(+) + H2O = (2S,4S)-4-hydroxy-2,3,4,5-tetrahydrodipicolinate + NADPH + H(+). It participates in amino-acid biosynthesis; L-lysine biosynthesis via DAP pathway; (S)-tetrahydrodipicolinate from L-aspartate: step 4/4. In terms of biological role, catalyzes the conversion of 4-hydroxy-tetrahydrodipicolinate (HTPA) to tetrahydrodipicolinate. This chain is 4-hydroxy-tetrahydrodipicolinate reductase, found in Laribacter hongkongensis (strain HLHK9).